Consider the following 224-residue polypeptide: UPF0441 protein ECA0329 (224 aa).

The disordered stretch occupies residues 180-224; it reads TALAPKPATTSTITRGGFGETVAKQNSMQRSSASSNSSSSRSMGG. Residues 204-224 show a composition bias toward low complexity; sequence QNSMQRSSASSNSSSSRSMGG.

This sequence belongs to the UPF0441 family.

This is UPF0441 protein ECA0329 from Pectobacterium atrosepticum (strain SCRI 1043 / ATCC BAA-672) (Erwinia carotovora subsp. atroseptica).